The chain runs to 437 residues: Keratin, type I cytoskeletal 13 (437 aa).

Positions 1–95 (MSCRFQSSSM…GVDGGLLSGN (95 aa)) are head. An omega-N-methylarginine mark is found at R27 and R35. The segment at 96-131 (EKITMQNLNDRLASYLDKVRALEAANADLEVKIRDW) is coil 1A. Residues 96 to 408 (EKITMQNLND…SLLEGQDAKM (313 aa)) form the IF rod domain. A linker 1 region spans residues 132-150 (HLKQSPASPERDYSAYYKT). Residues 151-242 (IEELRIKILE…KNHEEEMKEF (92 aa)) form a coil 1B region. The linker 12 stretch occupies residues 243-265 (SNQVVGQVNVEMDATPGIDLTRV). A coil 2 region spans residues 266–404 (LAEMREQYEA…ATYRSLLEGQ (139 aa)). Residues 405-437 (DAKMTGFNSGGNNTTTSNGSPSSNSGRPDFRKY) form a tail region. Residues 408–437 (MTGFNSGGNNTTTSNGSPSSNSGRPDFRKY) are disordered. Residues 409–430 (TGFNSGGNNTTTSNGSPSSNSG) are compositionally biased toward low complexity.

Belongs to the intermediate filament family. As to quaternary structure, heterotetramer of two type I and two type II keratins. Post-translationally, O-glycosylated; glycans consist of single N-acetylglucosamine residues. Expressed in tongue epithelia (at protein level). Expressed in upper suprabasal layers of the corneal epithelium (at protein level).

Functionally, type 1 keratin. Maintains postnatal tongue mucosal cell homeostasis and tissue organization in response to mechanical stress, potentially via regulation of the G1/S phase cyclins CCNE1 and CCNE2. In Mus musculus (Mouse), this protein is Keratin, type I cytoskeletal 13 (Krt13).